A 252-amino-acid polypeptide reads, in one-letter code: Imidazole glycerol phosphate synthase subunit HisF (252 aa).

Residues aspartate 11 and aspartate 130 contribute to the active site.

Belongs to the HisA/HisF family. As to quaternary structure, heterodimer of HisH and HisF.

It localises to the cytoplasm. The catalysed reaction is 5-[(5-phospho-1-deoxy-D-ribulos-1-ylimino)methylamino]-1-(5-phospho-beta-D-ribosyl)imidazole-4-carboxamide + L-glutamine = D-erythro-1-(imidazol-4-yl)glycerol 3-phosphate + 5-amino-1-(5-phospho-beta-D-ribosyl)imidazole-4-carboxamide + L-glutamate + H(+). The protein operates within amino-acid biosynthesis; L-histidine biosynthesis; L-histidine from 5-phospho-alpha-D-ribose 1-diphosphate: step 5/9. Functionally, IGPS catalyzes the conversion of PRFAR and glutamine to IGP, AICAR and glutamate. The HisF subunit catalyzes the cyclization activity that produces IGP and AICAR from PRFAR using the ammonia provided by the HisH subunit. The sequence is that of Imidazole glycerol phosphate synthase subunit HisF from Sulfurihydrogenibium sp. (strain YO3AOP1).